The chain runs to 186 residues: Ribosome-recycling factor (186 aa).

Belongs to the RRF family.

The protein localises to the cytoplasm. Functionally, responsible for the release of ribosomes from messenger RNA at the termination of protein biosynthesis. May increase the efficiency of translation by recycling ribosomes from one round of translation to another. The polypeptide is Ribosome-recycling factor (Brucella abortus (strain S19)).